Consider the following 516-residue polypeptide: Cytochrome P450 monooxygenase otaC (516 aa).

The helical transmembrane segment at phenylalanine 13–valine 30 threads the bilayer. Cysteine 454 lines the heme pocket.

Belongs to the cytochrome P450 family. The cofactor is heme.

It is found in the membrane. The enzyme catalyses 7-methylmellein + 3 reduced [NADPH--hemoprotein reductase] + 3 O2 = 7-carboxymellein + 3 oxidized [NADPH--hemoprotein reductase] + 4 H2O + 4 H(+). It functions in the pathway mycotoxin biosynthesis. Its function is as follows. Cytochrome P450 monooxygenase; part of the gene cluster that mediates the biosynthesis of ochratoxin A (OTA), a mycotoxin composed of a chlorinated type I polyketide dihydroisocoumarin moiety linked to L-phenylalanine, and demonstrated to have nephrotoxic, immunotoxic, genotoxic, neurotoxic, and teratogenic properties. OtaC catalyzes the oxidation of 7-methylmellein (7-MM) into 7-carboxymellein. The pathway begins with the highly reducing polyketide synthase otaA that catalyzes the formation of the isocoumarin group during the initial stages of biosynthesis, starting from one acetate and 4 malonate units, to originate the characteristic pentaketide skeleton 7-methylmellein (7-MM) of the OTA molecule. The newly identified cyclase otaY might be involved in the polyketide cyclization reaction during the initial steps of the OTA biosynthesis. 7-MM is then oxidized into 7-carboxymellein (also called ochratoxin beta) by the cytochrome P450 monooxygenase otaC. The NRPS encoded by the otaB gene is involved in the linking of phenylalanine to the dihydroisocoumarin ring. The reaction catalyzed by NRPS results in the production of ochratoxin B (OTB), which is the non-chlorinated analog of OTA and which subsequently serves as the substrate of the halogenase otaD for chlorination activity to form the final molecular structure of OTA, containing a chlorine atom in the C-5 position of the molecule. The sequence is that of Cytochrome P450 monooxygenase otaC from Aspergillus carbonarius (strain ITEM 5010).